Reading from the N-terminus, the 213-residue chain is CASP-like protein 2A1 (213 aa).

The Cytoplasmic portion of the chain corresponds to 1–41 (MSKMAEEKAAAVGGLGGAGAADAAQQQQLAAGEAAAARVRP). The chain crosses the membrane as a helical span at residues 42 to 62 (VETLLRAAPLGLCVAAMTVML). Residues 63–83 (RNQQSNEYGAVAYSDLGGFKY) lie on the Extracellular side of the membrane. The chain crosses the membrane as a helical span at residues 84–104 (LVYANGLCAAYSLVSAFYTAV). The Cytoplasmic portion of the chain corresponds to 105-113 (PRPATVSRS). The chain crosses the membrane as a helical span at residues 114-134 (WLVFLLDQVFTYLILAAGAAA). The Extracellular portion of the chain corresponds to 135-166 (AELLYLAYNGDKEVTWSEACGVFGSFCRQART). The helical transmembrane segment at 167-187 (SVAITFGTVLCFILLSLISSY) threads the bilayer. Residues 188–213 (RLFSAYEAPPSSALGSKGVEIAAYPR) are Cytoplasmic-facing.

Belongs to the Casparian strip membrane proteins (CASP) family. Homodimer and heterodimers.

Its subcellular location is the cell membrane. The protein is CASP-like protein 2A1 of Zea mays (Maize).